Reading from the N-terminus, the 221-residue chain is UPF0502 protein VSAL_II0605 (221 aa).

Belongs to the UPF0502 family.

This chain is UPF0502 protein VSAL_II0605, found in Aliivibrio salmonicida (strain LFI1238) (Vibrio salmonicida (strain LFI1238)).